The chain runs to 71 residues: Prokaryotic ubiquitin-like protein Pup (71 aa).

A compositionally biased stretch (low complexity) spans 1–18 (MATRDSGGQSQTGRSQQG). Residues 1–42 (MATRDSGGQSQTGRSQQGEEIEDVTTEASAEAAERHAEITED) are disordered. The segment at 27-65 (EASAEAAERHAEITEDVDDLLDEIDSVLEENAEEFVRGY) is ARC ATPase binding. The stretch at 29 to 60 (SAEAAERHAEITEDVDDLLDEIDSVLEENAEE) forms a coiled coil. Residue Glu-71 forms an Isoglutamyl lysine isopeptide (Glu-Lys) (interchain with K-? in acceptor proteins) linkage.

Belongs to the prokaryotic ubiquitin-like protein family. In terms of assembly, strongly interacts with the proteasome-associated ATPase ARC through a hydrophobic interface; the interacting region of Pup lies in its C-terminal half. There is one Pup binding site per ARC hexamer ring.

The protein operates within protein degradation; proteasomal Pup-dependent pathway. Its function is as follows. Protein modifier that is covalently attached to lysine residues of substrate proteins, thereby targeting them for proteasomal degradation. The tagging system is termed pupylation. The protein is Prokaryotic ubiquitin-like protein Pup of Salinispora tropica (strain ATCC BAA-916 / DSM 44818 / JCM 13857 / NBRC 105044 / CNB-440).